The primary structure comprises 86 residues: MIOREX complex component 7 (86 aa).

In terms of assembly, associates with the mitochondrial ribosome.

The protein resides in the mitochondrion. In terms of biological role, component of MIOREX complexes, large expressome-like assemblies of ribosomes with factors involved in all the steps of post-transcriptional gene expression. This is MIOREX complex component 7 from Saccharomyces cerevisiae (strain ATCC 204508 / S288c) (Baker's yeast).